Consider the following 632-residue polypeptide: MNSNSTIGRTTLGESDTISLSFSEPSSSLNSRSTDVVFASTSTLVPQQGSLTSLPPVSSTATPTYYSTSLTYDETLHTSIDVSSTSTLVSSTDSSSSSEQDTYSSQYDPATSSYSIITPSMSIFSSTSPMSSSSSITSEWSSLTSTTPTLSSSATSLSSSWSSLSSPSSLLVSSSLSSSSYSDTKLFSFDSRSSIFSPSTPTVISPSYTYLSSISATSFQISTTSELSSSWFSTISPSTTSNKDTTFPSSSRNTSTSFYSSSLSSTNDFSTISKSSKLSPSASSSTVSISTISVPTSSSVSSSSSKVPSNRPSSSSSSDDTTSAYSSTYTFQSLQSTTSSSIPPTTQTPSTSTISTSPIPTSSQVFNTAAISSSEDSKTIYYFYTQTYDITDSSTTFVTGLPTTIAVAKSEVTSFSAPSSTITADMSFYQHWLDGSLDNNKNQGPSKTNTGTIVGSVVGSVGGILICVLVVWFMLVRKRKAKRHFKENDSFCHEIGRRTGFPTTAQAKEASLQAQDSGSQQRNTETASANNPFSNEFNFKARGNPPPVPPPRNVTATNGSFQNMRSNFMDQENRFSYGSSFTYSSLGSSTQGGFSTLSSNSIRLGRGLDNDISHDERNTVQNNSQGFLREII.

Residues 1 to 18 are compositionally biased toward polar residues; sequence MNSNSTIGRTTLGESDTI. Disordered stretches follow at residues 1 to 33, 87 to 109, 236 to 267, 295 to 322, and 335 to 359; these read MNSN…NSRS, TLVS…QYDP, SPST…SSTN, PTSS…DDTT, and QSTT…TSPI. Residue Asn-4 is glycosylated (N-linked (GlcNAc...) asparagine). Composition is skewed to low complexity over residues 19–33 and 87–108; these read SLSF…NSRS and TLVS…SQYD. Asn-253 carries an N-linked (GlcNAc...) asparagine glycan. Residues 453 to 473 traverse the membrane as a helical segment; that stretch reads IVGSVVGSVGGILICVLVVWF. Asn-488 is a glycosylation site (N-linked (GlcNAc...) asparagine). Over residues 506 to 537 the composition is skewed to polar residues; sequence QAKEASLQAQDSGSQQRNTETASANNPFSNEF. Positions 506–551 are disordered; it reads QAKEASLQAQDSGSQQRNTETASANNPFSNEFNFKARGNPPPVPPP. Lys-508 is covalently cross-linked (Glycyl lysine isopeptide (Lys-Gly) (interchain with G-Cter in ubiquitin)). Residues Asn-553, Asn-558, and Asn-622 are each glycosylated (N-linked (GlcNAc...) asparagine). Ser-624 bears the Phosphoserine mark.

Belongs to the TDA7 family.

It is found in the vacuole membrane. The polypeptide is Topoisomerase I damage affected protein 7 (TDA7) (Saccharomyces cerevisiae (strain Lalvin EC1118 / Prise de mousse) (Baker's yeast)).